The following is a 102-amino-acid chain: Large ribosomal subunit protein uL24 (102 aa).

This sequence belongs to the universal ribosomal protein uL24 family. In terms of assembly, part of the 50S ribosomal subunit.

Functionally, one of two assembly initiator proteins, it binds directly to the 5'-end of the 23S rRNA, where it nucleates assembly of the 50S subunit. In terms of biological role, one of the proteins that surrounds the polypeptide exit tunnel on the outside of the subunit. This chain is Large ribosomal subunit protein uL24, found in Paraburkholderia phytofirmans (strain DSM 17436 / LMG 22146 / PsJN) (Burkholderia phytofirmans).